Here is a 433-residue protein sequence, read N- to C-terminus: Serine--tRNA ligase (433 aa).

235–237 contacts L-serine; the sequence is TSE. 266–268 contacts ATP; it reads RSE. Glu289 is an L-serine binding site. Position 353-356 (353-356) interacts with ATP; the sequence is EISS. Position 388 (Ser388) interacts with L-serine.

This sequence belongs to the class-II aminoacyl-tRNA synthetase family. Type-1 seryl-tRNA synthetase subfamily. Homodimer. The tRNA molecule binds across the dimer.

Its subcellular location is the cytoplasm. It carries out the reaction tRNA(Ser) + L-serine + ATP = L-seryl-tRNA(Ser) + AMP + diphosphate + H(+). The catalysed reaction is tRNA(Sec) + L-serine + ATP = L-seryl-tRNA(Sec) + AMP + diphosphate + H(+). Its pathway is aminoacyl-tRNA biosynthesis; selenocysteinyl-tRNA(Sec) biosynthesis; L-seryl-tRNA(Sec) from L-serine and tRNA(Sec): step 1/1. Catalyzes the attachment of serine to tRNA(Ser). Is also able to aminoacylate tRNA(Sec) with serine, to form the misacylated tRNA L-seryl-tRNA(Sec), which will be further converted into selenocysteinyl-tRNA(Sec). In Burkholderia ambifaria (strain MC40-6), this protein is Serine--tRNA ligase.